The sequence spans 266 residues: Tryptophan synthase alpha chain (266 aa).

Active-site proton acceptor residues include Glu49 and Asp60.

The protein belongs to the TrpA family. In terms of assembly, tetramer of two alpha and two beta chains.

It carries out the reaction (1S,2R)-1-C-(indol-3-yl)glycerol 3-phosphate + L-serine = D-glyceraldehyde 3-phosphate + L-tryptophan + H2O. The protein operates within amino-acid biosynthesis; L-tryptophan biosynthesis; L-tryptophan from chorismate: step 5/5. Functionally, the alpha subunit is responsible for the aldol cleavage of indoleglycerol phosphate to indole and glyceraldehyde 3-phosphate. The polypeptide is Tryptophan synthase alpha chain (Shewanella amazonensis (strain ATCC BAA-1098 / SB2B)).